The following is a 170-amino-acid chain: Zinc finger A20 and AN1 domain-containing stress-associated protein 6 (170 aa).

Residues 10-44 (PESNRLCVNNCGFLGSSATMNLCSNCYGDLCLKQQ) form an A20-type zinc finger. Zn(2+) contacts are provided by Cys-16, Cys-20, Cys-32, and Cys-35. Residues 53 to 76 (TVESSLSVSPPSSSSSEISSPIIP) form a disordered region. The segment at 105–151 (QQRPNRCTTCRKRVGLTGFKCRCGTMFCGVHRYPEIHGCSYDFKSAG) adopts an AN1-type zinc-finger fold. Positions 111, 114, 125, 127, 132, 135, 141, and 143 each coordinate Zn(2+).

Its function is as follows. May be involved in environmental stress response. This is Zinc finger A20 and AN1 domain-containing stress-associated protein 6 (SAP6) from Arabidopsis thaliana (Mouse-ear cress).